Reading from the N-terminus, the 338-residue chain is uncharacterized protein (338 aa).

The next 6 helical transmembrane spans lie at 13–33 (PAYS…DFLM), 71–91 (GLYS…ALFF), 110–130 (TLCF…VYVP), 176–196 (YGYR…LLFY), 218–238 (LITG…LDVA), and 301–321 (FRGF…MFVF). Solcar repeat units lie at residues 13-100 (PAYS…TKRH), 108-202 (PETL…LRQV), and 216-328 (RELI…IIRL).

It belongs to the mitochondrial carrier (TC 2.A.29) family.

It localises to the mitochondrion inner membrane. Functionally, mitochondrial solute carriers shuttle metabolites, nucleotides, and cofactors through the mitochondrial inner membrane. This is an uncharacterized protein from Schizosaccharomyces pombe (strain 972 / ATCC 24843) (Fission yeast).